The chain runs to 315 residues: Olfactory receptor 3A1 (315 aa).

Over methionine 1 to proline 28 the chain is Extracellular. A glycan (N-linked (GlcNAc...) asparagine) is linked at asparagine 8. Residues valine 29–valine 52 form a helical membrane-spanning segment. The Cytoplasmic portion of the chain corresponds to leucine 53–threonine 60. The helical transmembrane segment at proline 61–proline 82 threads the bilayer. The Extracellular portion of the chain corresponds to serine 83–glutamine 103. An intrachain disulfide couples cysteine 100 to cysteine 192. The chain crosses the membrane as a helical span at residues leucine 104–tyrosine 123. Residues aspartate 124–valine 143 are Cytoplasmic-facing. A helical transmembrane segment spans residues glutamine 144 to threonine 161. Over histidine 162–glutamate 199 the chain is Extracellular. A helical transmembrane segment spans residues leucine 200–histidine 223. Topologically, residues valine 224–alanine 240 are cytoplasmic. Residues phenylalanine 241–arginine 264 form a helical membrane-spanning segment. The Extracellular portion of the chain corresponds to leucine 265–lysine 275. A helical transmembrane segment spans residues alanine 276–phenylalanine 295. Over arginine 296 to alanine 315 the chain is Cytoplasmic.

This sequence belongs to the G-protein coupled receptor 1 family.

It is found in the cell membrane. In terms of biological role, odorant receptor. The sequence is that of Olfactory receptor 3A1 (OR3A1) from Homo sapiens (Human).